Consider the following 564-residue polypeptide: Probable pectinesterase/pectinesterase inhibitor 46 (564 aa).

Residues 25–45 (IAIIAISSIVLVCIVVGAVVG) form a helical membrane-spanning segment. The interval 62–207 (EPISVSVKAL…TEMTSNALAI (146 aa)) is pectinesterase inhibitor 46. Asparagine 90, asparagine 126, asparagine 147, and asparagine 196 each carry an N-linked (GlcNAc...) asparagine glycan. The pectinesterase 46 stretch occupies residues 257 to 550 (TIVVAKDGSG…FTVKPFIDGN (294 aa)). Positions 332 and 362 each coordinate substrate. Aspartate 385 acts as the Proton donor; for pectinesterase activity in catalysis. Cysteine 399 and cysteine 419 are disulfide-bonded. Catalysis depends on aspartate 406, which acts as the Nucleophile; for pectinesterase activity. N-linked (GlcNAc...) asparagine glycans are attached at residues asparagine 452 and asparagine 460. Arginine 470 and tryptophan 472 together coordinate substrate.

This sequence in the N-terminal section; belongs to the PMEI family. It in the C-terminal section; belongs to the pectinesterase family.

The protein resides in the membrane. The catalysed reaction is [(1-&gt;4)-alpha-D-galacturonosyl methyl ester](n) + n H2O = [(1-&gt;4)-alpha-D-galacturonosyl](n) + n methanol + n H(+). It functions in the pathway glycan metabolism; pectin degradation; 2-dehydro-3-deoxy-D-gluconate from pectin: step 1/5. In terms of biological role, acts in the modification of cell walls via demethylesterification of cell wall pectin. This Arabidopsis thaliana (Mouse-ear cress) protein is Probable pectinesterase/pectinesterase inhibitor 46 (PME46).